We begin with the raw amino-acid sequence, 470 residues long: 6-phosphofructo-2-kinase/fructose-2,6-bisphosphatase (470 aa).

The interval Met1–Thr249 is 6-phosphofructo-2-kinase. Position 31 is a phosphoserine; by PKA (Ser31). Gly47–Tyr55 is an ATP binding site. Beta-D-fructose 6-phosphate contacts are provided by Arg80 and Arg104. Asp130 is a catalytic residue. Beta-D-fructose 6-phosphate-binding residues include Thr132 and Arg138. Cys160 is an active-site residue. Asn169–Lys174 is a binding site for ATP. Beta-D-fructose 6-phosphate is bound by residues Lys174, Arg195, and Tyr199. The segment at Pro250–Phe470 is fructose-2,6-bisphosphatase. Arg257 contacts beta-D-fructose 2,6-bisphosphate. The active-site Tele-phosphohistidine intermediate is His258. 2 residues coordinate beta-D-fructose 2,6-bisphosphate: Asn264 and Gly270. Glu327 acts as the Proton donor/acceptor in catalysis. Residues Tyr338, Arg352, Lys356, Tyr367, Gln393, and Arg397 each coordinate beta-D-fructose 2,6-bisphosphate. ATP is bound at residue Phe349 to Arg352. ATP contacts are provided by residues Gln393–Arg397 and Tyr429.

The protein in the C-terminal section; belongs to the phosphoglycerate mutase family. As to quaternary structure, homodimer.

The enzyme catalyses beta-D-fructose 2,6-bisphosphate + H2O = beta-D-fructose 6-phosphate + phosphate. The catalysed reaction is beta-D-fructose 6-phosphate + ATP = beta-D-fructose 2,6-bisphosphate + ADP + H(+). With respect to regulation, phosphorylation results in inhibition of the kinase activity. In terms of biological role, synthesis and degradation of fructose 2,6-bisphosphate. The polypeptide is 6-phosphofructo-2-kinase/fructose-2,6-bisphosphatase (Aquarana catesbeiana (American bullfrog)).